The primary structure comprises 271 residues: Ribosomal RNA small subunit methyltransferase A (271 aa).

Residues asparagine 19, leucine 21, glycine 46, glutamate 67, aspartate 92, and asparagine 114 each coordinate S-adenosyl-L-methionine.

It belongs to the class I-like SAM-binding methyltransferase superfamily. rRNA adenine N(6)-methyltransferase family. RsmA subfamily.

It is found in the cytoplasm. The enzyme catalyses adenosine(1518)/adenosine(1519) in 16S rRNA + 4 S-adenosyl-L-methionine = N(6)-dimethyladenosine(1518)/N(6)-dimethyladenosine(1519) in 16S rRNA + 4 S-adenosyl-L-homocysteine + 4 H(+). Specifically dimethylates two adjacent adenosines (A1518 and A1519) in the loop of a conserved hairpin near the 3'-end of 16S rRNA in the 30S particle. May play a critical role in biogenesis of 30S subunits. This chain is Ribosomal RNA small subunit methyltransferase A, found in Aeromonas hydrophila subsp. hydrophila (strain ATCC 7966 / DSM 30187 / BCRC 13018 / CCUG 14551 / JCM 1027 / KCTC 2358 / NCIMB 9240 / NCTC 8049).